The sequence spans 363 residues: Phospho-N-acetylmuramoyl-pentapeptide-transferase (363 aa).

The next 9 helical transmembrane spans lie at 13 to 33 (ISGI…AFFL), 49 to 69 (LPLL…IPLL), 95 to 115 (MGGI…SNFA), 119 to 139 (LAVS…DWQI), 154 to 174 (LALQ…NQPS), 183 to 203 (WVSF…FVLV), 224 to 244 (AIAL…LMVF), 281 to 301 (AVAL…IFFV), and 343 to 363 (ELQV…ICLA).

The protein belongs to the glycosyltransferase 4 family. MraY subfamily. The cofactor is Mg(2+).

The protein resides in the cell inner membrane. It carries out the reaction UDP-N-acetyl-alpha-D-muramoyl-L-alanyl-gamma-D-glutamyl-meso-2,6-diaminopimeloyl-D-alanyl-D-alanine + di-trans,octa-cis-undecaprenyl phosphate = di-trans,octa-cis-undecaprenyl diphospho-N-acetyl-alpha-D-muramoyl-L-alanyl-D-glutamyl-meso-2,6-diaminopimeloyl-D-alanyl-D-alanine + UMP. It functions in the pathway cell wall biogenesis; peptidoglycan biosynthesis. In terms of biological role, catalyzes the initial step of the lipid cycle reactions in the biosynthesis of the cell wall peptidoglycan: transfers peptidoglycan precursor phospho-MurNAc-pentapeptide from UDP-MurNAc-pentapeptide onto the lipid carrier undecaprenyl phosphate, yielding undecaprenyl-pyrophosphoryl-MurNAc-pentapeptide, known as lipid I. The polypeptide is Phospho-N-acetylmuramoyl-pentapeptide-transferase (Nostoc punctiforme (strain ATCC 29133 / PCC 73102)).